A 181-amino-acid chain; its full sequence is Cyclic phosphodiesterase (181 aa).

H42 (proton donor/acceptor) is an active-site residue. Residue T44 coordinates substrate. 2 cysteine pairs are disulfide-bonded: C64–C177 and C104–C110. The Proton donor/acceptor role is filled by H119. Residues S121 and Y124 each contribute to the substrate site.

This sequence belongs to the 2H phosphoesterase superfamily. CPD1 family. As to expression, expressed in leaves, stems, roots, floral buds and germinating seeds.

Its subcellular location is the cytoplasm. It carries out the reaction ADP-alpha-D-ribose 1'',2''-cyclic phosphate + H2O = ADP-alpha-D-ribose 1''-phosphate + H(+). The enzyme catalyses 2',3'-cyclophospho-AMP + H2O = adenosine 2'-phosphate + H(+). It catalyses the reaction 2',3'-cyclophospho-GMP + H2O = guanosine 2'-phosphate + H(+). The catalysed reaction is 2',3'-cyclophospho-UMP + H2O = uridine 2'-phosphate + H(+). It carries out the reaction 2',3'-cyclophospho-CMP + H2O = cytidine 2'-phosphate + H(+). Inhibited by Cu(2+) and Zn(2+) at 0.5 mM by 93 and 87% respectively. Not inhibited by Ca(2+), Mg(2+), Co(2+), Ni(2+), and EDTA at 0.5 mM. Functionally, hydrolyzes ADP-ribose 1'',2''-cyclic phosphate (Appr&gt;1) that is produced during tRNA splicing into ADP-ribose 1''-phosphate (Appr-1''p). Also acts on nucleoside 2',3'-cyclic phosphates. The polypeptide is Cyclic phosphodiesterase (Arabidopsis thaliana (Mouse-ear cress)).